We begin with the raw amino-acid sequence, 394 residues long: Dual-specificity RNA methyltransferase RlmN (394 aa).

Catalysis depends on Glu115, which acts as the Proton acceptor. In terms of domain architecture, Radical SAM core spans 121 to 363; the sequence is DEGRGTLCVS…SPIRTPRGED (243 aa). Cys128 and Cys368 are disulfide-bonded. [4Fe-4S] cluster is bound by residues Cys135, Cys139, and Cys142. Residues 194–195, Ser226, 248–250, and Asn325 contribute to the S-adenosyl-L-methionine site; these read GE and SFH. The S-methylcysteine intermediate role is filled by Cys368.

This sequence belongs to the radical SAM superfamily. RlmN family. [4Fe-4S] cluster is required as a cofactor.

It is found in the cytoplasm. It carries out the reaction adenosine(2503) in 23S rRNA + 2 reduced [2Fe-2S]-[ferredoxin] + 2 S-adenosyl-L-methionine = 2-methyladenosine(2503) in 23S rRNA + 5'-deoxyadenosine + L-methionine + 2 oxidized [2Fe-2S]-[ferredoxin] + S-adenosyl-L-homocysteine. It catalyses the reaction adenosine(37) in tRNA + 2 reduced [2Fe-2S]-[ferredoxin] + 2 S-adenosyl-L-methionine = 2-methyladenosine(37) in tRNA + 5'-deoxyadenosine + L-methionine + 2 oxidized [2Fe-2S]-[ferredoxin] + S-adenosyl-L-homocysteine. Its function is as follows. Specifically methylates position 2 of adenine 2503 in 23S rRNA and position 2 of adenine 37 in tRNAs. m2A2503 modification seems to play a crucial role in the proofreading step occurring at the peptidyl transferase center and thus would serve to optimize ribosomal fidelity. The polypeptide is Dual-specificity RNA methyltransferase RlmN (Roseobacter denitrificans (strain ATCC 33942 / OCh 114) (Erythrobacter sp. (strain OCh 114))).